Consider the following 377-residue polypeptide: Prolargin (377 aa).

The N-terminal stretch at 1 to 21 is a signal peptide; it reads MRASFFWFLPLLLILASVAQG. Positions 22-61 are disordered; that stretch reads QPRPKPGIRRKPKPRPTPSFPQPHEPAEPTDLPPPLPPGP. Composition is skewed to pro residues over residues 36-45 and 52-61; these read RPTPSFPQPH and DLPPPLPPGP. LRR repeat units lie at residues 90–109, 110–133, 134–157, 158–178, 179–202, 203–228, 229–249, 250–273, 274–298, 299–318, 319–357, and 358–377; these read RKVP…NNFI, TELP…NNRI, RKVD…KNQL, EEVP…QNLI, SRIP…HNRL, SDGV…HNIL, RRMP…SNKI, ETIP…YNKL, SDRG…HNKI, SNVP…NNSI, EKIN…GNFL, and KPPI…SVVI. A glycan (N-linked (GlcNAc...) asparagine) is linked at asparagine 119. N-linked (GlcNAc...) asparagine glycans are attached at residues asparagine 284, asparagine 315, and asparagine 322. Cysteine 327 and cysteine 368 are joined by a disulfide.

The protein belongs to the small leucine-rich proteoglycan (SLRP) family. SLRP class II subfamily. As to quaternary structure, binds the basement membrane heparan sulfate proteoglycan perlecan and triple helical collagens type I and type II. Glycosylated; contains heparan sulfate.

It localises to the secreted. It is found in the extracellular space. The protein resides in the extracellular matrix. Its function is as follows. May anchor basement membranes to the underlying connective tissue. The chain is Prolargin (Prelp) from Rattus norvegicus (Rat).